A 609-amino-acid polypeptide reads, in one-letter code: 2',5'-phosphodiesterase 12 (609 aa).

The transit peptide at 1-16 (MWRLPGVRAALRGVRT) directs the protein to the mitochondrion. Positions 203–231 (PRAAEPEGGGPSSSSPSSPSPGWTETGVD) are disordered. Residues 214–224 (SSSSPSSPSPG) are compositionally biased toward low complexity. Phosphoserine is present on Ser217. 3 residues coordinate Mg(2+): Glu351, Asp496, and Asn498. Asp496 (proton donor/acceptor) is an active-site residue.

The protein belongs to the CCR4/nocturin family. Mg(2+) is required as a cofactor. Liver.

Its subcellular location is the mitochondrion matrix. The catalysed reaction is Exonucleolytic cleavage of poly(A) to 5'-AMP.. Functionally, enzyme that cleaves 2',5'-phosphodiester bond linking adenosines of the 5'-triphosphorylated oligoadenylates, triphosphorylated oligoadenylates referred as 2-5A modulates the 2-5A system. Degrades triphosphorylated 2-5A to produce AMP and ATP. Also cleaves 3',5'-phosphodiester bond of oligoadenylates. Plays a role as a negative regulator of the 2-5A system that is one of the major pathways for antiviral and antitumor functions induced by interferons (IFNs). Suppression of this enzyme increases cellular 2-5A levels and decreases viral replication in cultured small-airway epithelial cells. This Bos taurus (Bovine) protein is 2',5'-phosphodiesterase 12 (PDE12).